A 292-amino-acid chain; its full sequence is Protein SETSIP (292 aa).

Over residues 1–11 (MAPKRQSPLPL) the composition is skewed to low complexity. Disordered regions lie at residues 1–43 (MAPK…EQQE) and 158–292 (LNES…GEDD). Residues 35 to 78 (KKGEKEQQEAIEHIDEVQNEIDRLNEQDSEEILKVEQKYNKLRQ) adopt a coiled-coil conformation. Acidic residues predominate over residues 237–292 (DMDDEEGGEDDDDDDDDGDEGEEELEDIDEGDEDEGEEDEDDDEGEEGEEDEGEDD).

Belongs to the nucleosome assembly protein (NAP) family. As to expression, expressed in endothelial cell (EC) and protein-induced pluripotent stem (PiPS) endothelial cell (EC) (at protein level).

It localises to the cytoplasm. The protein resides in the nucleus. Plays a role as a transcriptional activator involved in the early stage of somatic cell reprogramming. Promotes the differentiation of protein-induced pluripotent stem (PiPS) cells into endothelial cells and the formation of vascular-like tubes (in vitro). Involved in the transcription induction of vascular endothelial-cadherin (VE-cadherin) expression. Associates to the VE-cadherin gene promoter. In Homo sapiens (Human), this protein is Protein SETSIP (SETSIP).